The sequence spans 204 residues: Large ribosomal subunit protein uL4 (204 aa).

The span at 42–52 (GTKAQKSRSQV) shows a compositional bias: polar residues. The disordered stretch occupies residues 42 to 70 (GTKAQKSRSQVSGTTKKSKKQKGGGARHG).

It belongs to the universal ribosomal protein uL4 family. As to quaternary structure, part of the 50S ribosomal subunit.

Functionally, one of the primary rRNA binding proteins, this protein initially binds near the 5'-end of the 23S rRNA. It is important during the early stages of 50S assembly. It makes multiple contacts with different domains of the 23S rRNA in the assembled 50S subunit and ribosome. Its function is as follows. Forms part of the polypeptide exit tunnel. The chain is Large ribosomal subunit protein uL4 from Xylella fastidiosa (strain M12).